Consider the following 143-residue polypeptide: Transcriptional regulator MraZ (143 aa).

SpoVT-AbrB domains lie at 5-47 (EYEH…TLEE) and 76-119 (AVEV…DRAS).

The protein belongs to the MraZ family. Forms oligomers.

It localises to the cytoplasm. The protein resides in the nucleoid. This Staphylococcus carnosus (strain TM300) protein is Transcriptional regulator MraZ.